A 99-amino-acid polypeptide reads, in one-letter code: Protein adenylyltransferase MntA (99 aa).

The GSX(10)DXD motif motif lies at 33–47; sequence GSYVRGEAKEDSDVD. Residues Asp-45 and Asp-47 contribute to the active site. Residues Asp-45, Asp-47, and Asp-77 each contribute to the Mg(2+) site.

It belongs to the MntA antitoxin family. Mg(2+) is required as a cofactor.

The enzyme catalyses L-tyrosyl-[protein] + ATP = O-(5'-adenylyl)-L-tyrosyl-[protein] + diphosphate. The catalysed reaction is O-(5'-adenylyl)-L-tyrosyl-[protein] + ATP = O-[5'-(adenylyl-(5'-&gt;3')-adenylyl)]-L-tyrosyl-[protein] + diphosphate. Functionally, antitoxin component of a type VII toxin-antitoxin (TA) system. Overexpression in E.coli neutralizes the toxic effect of cognate toxin HepT. Neutralization is mostly due to AMPylation of the toxin by this enzyme. The chain is Protein adenylyltransferase MntA from Thermococcus cleftensis (strain DSM 27260 / KACC 17922 / CL1).